A 78-amino-acid chain; its full sequence is Large ribosomal subunit protein bL28 (78 aa).

Belongs to the bacterial ribosomal protein bL28 family.

The sequence is that of Large ribosomal subunit protein bL28 from Prochlorococcus marinus (strain MIT 9515).